The sequence spans 83 residues: Three-finger toxin MALT0066C (83 aa).

Positions 1–21 (MKTLLLTLVVVTIVCLDFGHT) are cleaved as a signal peptide. 4 disulfide bridges follow: cysteine 24–cysteine 45, cysteine 38–cysteine 62, cysteine 64–cysteine 75, and cysteine 76–cysteine 81.

It belongs to the three-finger toxin family. Short-chain subfamily. Type I alpha-neurotoxin sub-subfamily. In terms of assembly, dimer. As to expression, expressed by the venom gland.

Its subcellular location is the secreted. Binds to muscle nicotinic acetylcholine receptor (nAChR) and inhibit acetylcholine from binding to the receptor, thereby impairing neuromuscular transmission. This is Three-finger toxin MALT0066C from Micrurus altirostris (Uruguayan coral snake).